Consider the following 342-residue polypeptide: MLTERQLIILQVIIDDFIETAHPIGSRALSKSEYLPYSAATIRNEMADLEDLGFLEKTHTSSGRIPSEKGYRYYVDHLIGPMNQHEAGILRKYTDGEFFEFEQVVQMTAEVLSELTNYTSIILGPEMFEATLKQIQVLTLSDHTAVAILVTSTGHVEHRSFALPEGIASSDLEKLVNILNDRLKGVPIIRLGEVISTEVAQLMHRYMDDFEASFDLLRAFFMNEHPVKLYFGGKSNILMQPEFNDVDKIRSFYALIEQEDEIANLLKNTHQGIKVSIGNENKVEAIKDLSLITASYHVGDNLMGTIALLGPTRMEYKKVISLMKGISDEMTNTLDRWYKGDS.

The protein belongs to the HrcA family.

Negative regulator of class I heat shock genes (grpE-dnaK-dnaJ and groELS operons). Prevents heat-shock induction of these operons. In Oceanobacillus iheyensis (strain DSM 14371 / CIP 107618 / JCM 11309 / KCTC 3954 / HTE831), this protein is Heat-inducible transcription repressor HrcA.